Consider the following 829-residue polypeptide: 1,4-alpha-glucan branching enzyme GlgB (829 aa).

The active-site Nucleophile is Asp-405. Residue Glu-458 is the Proton donor of the active site. A disordered region spans residues 758-829 (ASKATKVSTK…TTAKKTKDNA (72 aa)). Low complexity-rich tracts occupy residues 778-789 (VKAATKSSVTKV) and 810-820 (VTKTAKASAKT).

It belongs to the glycosyl hydrolase 13 family. GlgB subfamily. In terms of assembly, monomer.

It catalyses the reaction Transfers a segment of a (1-&gt;4)-alpha-D-glucan chain to a primary hydroxy group in a similar glucan chain.. The protein operates within glycan biosynthesis; glycogen biosynthesis. Functionally, catalyzes the formation of the alpha-1,6-glucosidic linkages in glycogen by scission of a 1,4-alpha-linked oligosaccharide from growing alpha-1,4-glucan chains and the subsequent attachment of the oligosaccharide to the alpha-1,6 position. The polypeptide is 1,4-alpha-glucan branching enzyme GlgB (Actinobacillus succinogenes (strain ATCC 55618 / DSM 22257 / CCUG 43843 / 130Z)).